The following is a 117-amino-acid chain: Non-specific lipid-transfer protein (117 aa).

An N-terminal signal peptide occupies residues Met-1 to Ala-26. Intrachain disulfides connect Cys-29–Cys-76, Cys-39–Cys-53, Cys-54–Cys-99, and Cys-74–Cys-113.

It belongs to the plant LTP family.

Its function is as follows. Plant non-specific lipid-transfer proteins transfer phospholipids as well as galactolipids across membranes. May play a role in wax or cutin deposition in the cell walls of expanding epidermal cells and certain secretory tissues. Also has fungicide activity. In Beta vulgaris (Sugar beet), this protein is Non-specific lipid-transfer protein (IWF1').